A 41-amino-acid polypeptide reads, in one-letter code: Large ribosomal subunit protein bL36 (41 aa).

The protein belongs to the bacterial ribosomal protein bL36 family.

The chain is Large ribosomal subunit protein bL36 from Rickettsia canadensis (strain McKiel).